A 201-amino-acid polypeptide reads, in one-letter code: Protease (201 aa).

Active-site residues include His53, Asp70, and Cys121.

It belongs to the peptidase C5 family. In terms of assembly, interacts with protease cofactor pVI-C; this interaction is necessary for protease activation.

It is found in the virion. Its subcellular location is the host nucleus. It carries out the reaction Cleaves proteins of the adenovirus and its host cell at two consensus sites: -Yaa-Xaa-Gly-Gly-|-Xaa- and -Yaa-Xaa-Gly-Xaa-|-Gly- (in which Yaa is Met, Ile or Leu, and Xaa is any amino acid).. Its activity is regulated as follows. Requires DNA and protease cofactor for maximal activation. Inside nascent virions, becomes partially activated by binding to the viral DNA, allowing it to cleave the cofactor that binds to the protease and fully activates it. Actin, like the viral protease cofactor, seems to act as a cofactor in the cleavage of cytokeratin 18 and of actin itself. Its function is as follows. Cleaves viral precursor proteins (pTP, pIIIa, pVI, pVII, pVIII, and pX) inside newly assembled particles giving rise to mature virions. Protease complexed to its cofactor slides along the viral DNA to specifically locate and cleave the viral precursors. Mature virions have a weakened organization compared to the unmature virions, thereby facilitating subsequent uncoating. Without maturation, the particle lacks infectivity and is unable to uncoat. Late in adenovirus infection, in the cytoplasm, may participate in the cytoskeleton destruction. Cleaves host cell cytoskeletal keratins K7 and K18. This is Protease from Equine adenovirus B serotype 2 (EAdV-2).